Here is a 90-residue protein sequence, read N- to C-terminus: Progonadoliberin-3 (90 aa).

A signal peptide spans 1–23 (MEAGSRVIMQVLLLALVVQVTLS). The residue at position 24 (Gln24) is a Pyrrolidone carboxylic acid. Gly33 bears the Glycine amide mark.

It belongs to the GnRH family. In terms of tissue distribution, expressed only in the terminal nerve nucleus of the telencephalon.

It localises to the secreted. Stimulates the secretion of gonadotropins. The polypeptide is Progonadoliberin-3 (gnrh3) (Haplochromis burtoni (Burton's mouthbrooder)).